The sequence spans 261 residues: Ribonuclease HII (261 aa).

The 189-residue stretch at 71-259 folds into the RNase H type-2 domain; the sequence is KYIAGVDEVG…VKESKLHFDS (189 aa). 3 residues coordinate a divalent metal cation: D77, E78, and D169.

This sequence belongs to the RNase HII family. Requires Mn(2+) as cofactor. Mg(2+) is required as a cofactor.

It localises to the cytoplasm. The catalysed reaction is Endonucleolytic cleavage to 5'-phosphomonoester.. In terms of biological role, endonuclease that specifically degrades the RNA of RNA-DNA hybrids. In Listeria monocytogenes serovar 1/2a (strain ATCC BAA-679 / EGD-e), this protein is Ribonuclease HII.